The sequence spans 641 residues: Chaperone protein DnaK (641 aa).

Position 200 is a phosphothreonine; by autocatalysis (T200). The segment covering 606–623 (AEQGGNADAASGNAQASK) has biased composition (low complexity). The disordered stretch occupies residues 606–627 (AEQGGNADAASGNAQASKAADD).

Belongs to the heat shock protein 70 family.

Acts as a chaperone. This chain is Chaperone protein DnaK, found in Xanthomonas euvesicatoria pv. vesicatoria (strain 85-10) (Xanthomonas campestris pv. vesicatoria).